A 94-amino-acid polypeptide reads, in one-letter code: Scorpine-like-1 (94 aa).

The signal sequence occupies residues 1-18 (MNTKFTVLIFLGVIVVSY). In terms of domain architecture, BetaSPN-type CS-alpha/beta spans 54 to 94 (EYGCMMDISWNKDCQRHCQSTEQKDGICHGMKCKCGKPRSY). 3 disulfide bridges follow: C57–C81, C67–C86, and C71–C88.

Belongs to the long chain scorpion toxin family. Class 3 subfamily. Expressed by the venom gland.

It localises to the secreted. Its function is as follows. Has antibacterial activity. This Urodacus yaschenkoi (Inland robust scorpion) protein is Scorpine-like-1.